The primary structure comprises 171 residues: 3-hydroxydecanoyl-[acyl-carrier-protein] dehydratase (171 aa).

Residue H70 is part of the active site.

It belongs to the thioester dehydratase family. FabA subfamily. As to quaternary structure, homodimer.

It localises to the cytoplasm. It catalyses the reaction a (3R)-hydroxyacyl-[ACP] = a (2E)-enoyl-[ACP] + H2O. The catalysed reaction is (3R)-hydroxydecanoyl-[ACP] = (2E)-decenoyl-[ACP] + H2O. It carries out the reaction (2E)-decenoyl-[ACP] = (3Z)-decenoyl-[ACP]. The protein operates within lipid metabolism; fatty acid biosynthesis. Functionally, necessary for the introduction of cis unsaturation into fatty acids. Catalyzes the dehydration of (3R)-3-hydroxydecanoyl-ACP to E-(2)-decenoyl-ACP and then its isomerization to Z-(3)-decenoyl-ACP. Can catalyze the dehydratase reaction for beta-hydroxyacyl-ACPs with saturated chain lengths up to 16:0, being most active on intermediate chain length. The protein is 3-hydroxydecanoyl-[acyl-carrier-protein] dehydratase of Pseudomonas putida (strain W619).